The chain runs to 1487 residues: Protein cft1 (1487 aa).

Over residues 486-504 the composition is skewed to acidic residues; it reads DLDLDDEDLEDDDDDDLYG. A disordered region spans residues 486 to 513; it reads DLDLDDEDLEDDDDDDLYGEESASPEQA.

Belongs to the CFT1 family.

The protein resides in the nucleus. In terms of biological role, RNA-binding component of the cleavage and polyadenylation factor (CPF) complex, which plays a key role in polyadenylation-dependent pre-mRNA 3'-end formation and cooperates with cleavage factors including the CFIA complex and hrp1/CFIB. Involved in poly(A) site recognition. May be involved in coupling transcription termination and mRNA 3'-end formation. The protein is Protein cft1 (paa-3) of Neurospora crassa (strain ATCC 24698 / 74-OR23-1A / CBS 708.71 / DSM 1257 / FGSC 987).